Consider the following 263-residue polypeptide: L-histidine 2-aminobutanoyltransferase (263 aa).

Belongs to the methyltransferase superfamily. CntL family. As to quaternary structure, interacts with CntM.

It catalyses the reaction L-histidine + S-adenosyl-L-methionine = (2S)-2-amino-4-{[(1S)-1-carboxy-2-(1H-imidazol-4-yl)ethyl]amino}butanoate + S-methyl-5'-thioadenosine + H(+). In terms of biological role, catalyzes the nucleophilic attack of one alpha-aminobutanoate moiety from SAM onto L-histidine to produce the intermediate (2S)-2-amino-4-{[(1S)-1-carboxy-2-(1H-imidazol-4-yl)ethyl]amino}butanoate. Functions in the biosynthesis of the metallophore pseudopaline, which is involved in the acquisition of nickel and zinc, and thus enables bacterial growth inside the host, where metal access is limited. Therefore, this enzyme probably contributes to Pseudomonas virulence. Cannot use D-histidine in place of L-histidine as substrate. In Pseudomonas aeruginosa (strain UCBPP-PA14), this protein is L-histidine 2-aminobutanoyltransferase.